Here is a 315-residue protein sequence, read N- to C-terminus: Olfactory receptor 2V1 (315 aa).

The next 7 membrane-spanning stretches (helical) occupy residues 31-51 (TVML…LLIY), 59-79 (PMYF…CNIV), 100-120 (IQIG…GLMA), 145-165 (IAGS…VAAM), 196-216 (FDTL…SIIV), 239-259 (LATC…AMFI), and 273-293 (KVVS…IYSL). The cysteines at positions 98 and 180 are disulfide-linked.

This sequence belongs to the G-protein coupled receptor 1 family.

It is found in the cell membrane. Functionally, odorant receptor. Activated by (+) and (-)-limonene. The chain is Olfactory receptor 2V1 from Mus musculus (Mouse).